A 115-amino-acid chain; its full sequence is Putative membrane protein insertion efficiency factor (115 aa).

The protein belongs to the UPF0161 family.

The protein localises to the cell membrane. Its function is as follows. Could be involved in insertion of integral membrane proteins into the membrane. This chain is Putative membrane protein insertion efficiency factor, found in Mycobacterium avium (strain 104).